The sequence spans 75 residues: Sec-independent protein translocase protein TatA (75 aa).

The helical transmembrane segment at 1 to 21 (MGSMSIWHWIVVLAVVLLLFG) threads the bilayer. The disordered stretch occupies residues 43–75 (MAEDDDAPAKPAEPPRAVPHQATPAPESEKKAV).

This sequence belongs to the TatA/E family. As to quaternary structure, the Tat system comprises two distinct complexes: a TatABC complex, containing multiple copies of TatA, TatB and TatC subunits, and a separate TatA complex, containing only TatA subunits. Substrates initially bind to the TatABC complex, which probably triggers association of the separate TatA complex to form the active translocon.

The protein resides in the cell inner membrane. Its function is as follows. Part of the twin-arginine translocation (Tat) system that transports large folded proteins containing a characteristic twin-arginine motif in their signal peptide across membranes. TatA could form the protein-conducting channel of the Tat system. This Azorhizobium caulinodans (strain ATCC 43989 / DSM 5975 / JCM 20966 / LMG 6465 / NBRC 14845 / NCIMB 13405 / ORS 571) protein is Sec-independent protein translocase protein TatA.